Consider the following 571-residue polypeptide: La-related protein 7 (571 aa).

Met1 is modified (N-acetylmethionine). The span at 1–17 (METENQKTMEESTEKRK) shows a compositional bias: basic and acidic residues. Disordered regions lie at residues 1-25 (METENQKTMEESTEKRKEEKKKRSR) and 181-366 (LNNP…ERHK). The region spanning 23–117 (RSRVKQVLAD…KPLGERPKDE (95 aa)) is the HTH La-type RNA-binding domain. An RRM domain is found at 120-198 (RTVYVELLPK…PRKPGIFPKT (79 aa)). Residues 214-223 (KKKKKKKGRI) show a composition bias toward basic residues. Lys232 is covalently cross-linked (Glycyl lysine isopeptide (Lys-Gly) (interchain with G-Cter in SUMO2)). Thr252 is modified (phosphothreonine). Ser254 and Ser257 each carry phosphoserine. The residue at position 261 (Thr261) is a Phosphothreonine. A compositionally biased stretch (basic and acidic residues) spans 287-296 (KAGKRERSSA). 3 positions are modified to phosphoserine: Ser294, Ser295, and Ser335. Thr336 is modified (phosphothreonine). The span at 342 to 351 (PGDRKGDSLS) shows a compositional bias: basic and acidic residues. At Ser349 the chain carries Phosphoserine. The span at 352–365 (KGKRKHKKKHKERH) shows a compositional bias: basic residues. Lys408 participates in a covalent cross-link: Glycyl lysine isopeptide (Lys-Gly) (interchain with G-Cter in SUMO2). A disordered region spans residues 411-432 (SEMETESKAPPGSGQQCSTQEK). Residues 423–432 (SGQQCSTQEK) show a composition bias toward polar residues. The 114-residue stretch at 439–552 (QFVTGVIVKI…TEKLITKAEK (114 aa)) folds into the xRRM domain.

It belongs to the LARP7 family. As to quaternary structure, core component of the 7SK RNP complex, at least composed of 7SK RNA, LARP7, MEPCE, HEXIM1 (or HEXIM2) and P-TEFb (composed of CDK9 and CCNT1/cyclin-T1). Interacts with METTL16. Interacts with RBM7; upon genotoxic stress this interaction is enhanced, triggering the release of inactive P-TEFb complex from the core, yielding to P-TEFb complex activation. Associates with box C/D small nucleolar ribonucleoprotein (snoRNP) complexes.

It localises to the nucleus. The protein resides in the nucleoplasm. Functionally, RNA-binding protein that specifically binds distinct small nuclear RNA (snRNAs) and regulates their processing and function. Specifically binds the 7SK snRNA (7SK RNA) and acts as a core component of the 7SK ribonucleoprotein (RNP) complex, thereby acting as a negative regulator of transcription elongation by RNA polymerase II. The 7SK RNP complex sequesters the positive transcription elongation factor b (P-TEFb) in a large inactive 7SK RNP complex preventing RNA polymerase II phosphorylation and subsequent transcriptional elongation. The 7SK RNP complex also promotes snRNA gene transcription by RNA polymerase II via interaction with the little elongation complex (LEC). LARP7 specifically binds to the highly conserved 3'-terminal U-rich stretch of 7SK RNA; on stimulation, remains associated with 7SK RNA, whereas P-TEFb is released from the complex. LARP7 also acts as a regulator of mRNA splicing fidelity by promoting U6 snRNA processing. Specifically binds U6 snRNAs and associates with a subset of box C/D RNP complexes: promotes U6 snRNA 2'-O-methylation by facilitating U6 snRNA loading into box C/D RNP complexes. U6 snRNA 2'-O-methylation is required for mRNA splicing fidelity. Binds U6 snRNAs with a 5'-CAGGG-3' sequence motif. U6 snRNA processing is required for spermatogenesis. The sequence is that of La-related protein 7 from Rattus norvegicus (Rat).